The chain runs to 564 residues: Tripeptidyl-peptidase 1 (564 aa).

The first 19 residues, 1–19, serve as a signal peptide directing secretion; it reads MGLQACLLGLFALILSGKC. The propeptide at 20–195 is removed in mature form; it reads SYSPEPDQRR…PEPQVTGTVG (176 aa). Cys111 and Cys122 are joined by a disulfide. Residues 199 to 564 form the Peptidase S53 domain; it reads GVTPSVIRKR…PALPKTLLNP (366 aa). Asn210 and Asn222 each carry an N-linked (GlcNAc...) asparagine glycan. Residues Glu272 and Asp276 each act as charge relay system in the active site. Asn286, Asn313, and Asn443 each carry an N-linked (GlcNAc...) asparagine glycan. 2 disulfide bridges follow: Cys365–Cys527 and Cys523–Cys538. The active-site Charge relay system is the Ser475. Ca(2+)-binding residues include Asp518 and Val519. Residues Gly540, Gly542, and Asp544 each coordinate Ca(2+).

As to quaternary structure, monomer. Interacts with CLN5. Interacts with CLN3. Ca(2+) is required as a cofactor. In terms of processing, activated by autocatalytic proteolytical processing upon acidification. N-glycosylation is required for processing and activity.

It localises to the lysosome. It is found in the melanosome. The catalysed reaction is Release of an N-terminal tripeptide from a polypeptide, but also has endopeptidase activity.. Lysosomal serine protease with tripeptidyl-peptidase I activity. May act as a non-specific lysosomal peptidase which generates tripeptides from the breakdown products produced by lysosomal proteinases. Requires substrates with an unsubstituted N-terminus. In Pongo abelii (Sumatran orangutan), this protein is Tripeptidyl-peptidase 1 (TPP1).